A 428-amino-acid chain; its full sequence is Endoplasmic reticulum junction formation protein lunapark (428 aa).

Gly-2 carries the N-myristoyl glycine lipid modification. The Cytoplasmic segment spans residues 2 to 45; that stretch reads GGLFSRWRTKPSTVEVLESIDKEIQALEEFREKNQRLQKLWVGR. Positions 16–41 form a coiled coil; sequence EVLESIDKEIQALEEFREKNQRLQKL. A helical membrane pass occupies residues 46 to 66; that stretch reads LILYSSVLYLFTCLIVYLWYL. Topologically, residues 67 to 77 are lumenal; sequence PDEFTARLAMT. The helical transmembrane segment at 78-98 threads the bilayer; the sequence is LPFFAFPLIIWSIRTVIIFFF. Over 99–428 the chain is Cytoplasmic; sequence SKRTERNNEA…ELSGESLTAE (330 aa). Residues 102-128 adopt a coiled-coil conformation; sequence TERNNEALDDLKSQRKKILEEVMEKET. Residues Ser-114, Ser-153, Ser-177, Ser-182, and Ser-194 each carry the phosphoserine modification. Residues 143–247 are disordered; it reads SKKAKECEPP…HPPGPPLARP (105 aa). Residues 185–198 show a composition bias toward pro residues; sequence QGPPPQVPVSPGPP. Residues Thr-211 and Thr-213 each carry the phosphothreonine modification. Residues Ser-217 and Ser-227 each carry the phosphoserine modification. The C4-type; plays a role in ER morphology zinc-finger motif lies at 276 to 301; the sequence is CQQCFSHNGMALKEEFEYIAFRCAYC. A phosphoserine mark is found at Ser-321, Ser-353, and Ser-384. A disordered region spans residues 356-428; it reads HDVLDDNTEQ…ELSGESLTAE (73 aa). Positions 386–401 are enriched in acidic residues; that stretch reads SEEPEEKQETENEEAS. Phosphoserine is present on Ser-414.

The protein belongs to the lunapark family. As to quaternary structure, homodimer; homodimerization requires the C4-type zinc finger motif and decreases during mitosis in a phosphorylation-dependent manner. Post-translationally, myristoylated; myristoylation is necessary for the endoplasmic reticulum (ER) three-way ER tubular junction formation, but is not required neither for membrane translocation, membrane topology formation, nor for the specific localization to ER membranes. Phosphorylated. Phosphorylation occurs at Ser-177, Ser-182, Ser-217, Ser-227, Ser-321 and Ser-384 during interphase. Phosphorylation occurs at Ser-114, Ser-153, Ser-194, Thr-211 and Ser-353 during mitosis; these phosphorylations reduce both its homodimerization and the ER three-way tubular junction formation. In terms of processing, subject to proteasomal degradation following phosphorylation during mitosis. Expressed in neural precursor cells, where it is detected at the growth-cone-like structure and branching sites of neurite-like processes.

It localises to the endoplasmic reticulum membrane. Its function is as follows. Endoplasmic reticulum (ER)-shaping membrane protein that plays a role in determining ER morphology. Involved in the stabilization of nascent three-way ER tubular junctions within the ER network. May also play a role as a curvature-stabilizing protein within the three-way ER tubular junction network. May be involved in limb development. Is involved in central nervous system development. The polypeptide is Endoplasmic reticulum junction formation protein lunapark (Homo sapiens (Human)).